A 105-amino-acid chain; its full sequence is U21-theraphotoxin-Cg1a 4 (105 aa).

Residues 1–21 (MKVSVLITLAVLGVMFLLTSA) form the signal peptide. A propeptide spanning residues 22 to 48 (EERGSDQMDSPAWLKSMEIIFQSEERE) is cleaved from the precursor. 3 disulfides stabilise this stretch: Cys49/Cys63, Cys56/Cys68, and Cys62/Cys76. Residue Val82 is modified to Valine amide. Residues 83–105 (GKWEMLINMNIFRIVFSYSMCTV) constitute a propeptide that is removed on maturation.

Belongs to the neurotoxin 10 (Hwtx-1) family. 05 (F4a) subfamily. Expressed by the venom gland.

The protein resides in the secreted. Functionally, probable ion channel inhibitor. The chain is U21-theraphotoxin-Cg1a 4 from Chilobrachys guangxiensis (Chinese earth tiger tarantula).